The primary structure comprises 258 residues: MDKTIVFKCGGSVIRELSDTFYENVRSLQAAGFKLAIVHGGGPEITNMLQKLDVKTEFVDGQRKTTKPVLEVAEMVLSGTVNKYFVSELAKHDISSVGVSGKDGQMLVADFLDQDVYGYVGEIKEVHPEMAEALMEKQFIPVIAPLSMTEECQTLNVNADLAASAVAGAMKADKLMFVTDVEGILKNGELLDVVTEQEALTLIDEGIISGGMIPKVQSALSALSGDVDEVMIVNGKGSIFTGETFKGTRIVKEKEAVL.

Substrate contacts are provided by residues 41 to 42, R63, and N156; that span reads GG.

Belongs to the acetylglutamate kinase family. ArgB subfamily.

It is found in the cytoplasm. The enzyme catalyses N-acetyl-L-glutamate + ATP = N-acetyl-L-glutamyl 5-phosphate + ADP. Its pathway is amino-acid biosynthesis; L-arginine biosynthesis; N(2)-acetyl-L-ornithine from L-glutamate: step 2/4. Its function is as follows. Catalyzes the ATP-dependent phosphorylation of N-acetyl-L-glutamate. This Bacillus pumilus (strain SAFR-032) protein is Acetylglutamate kinase.